Consider the following 297-residue polypeptide: Cell division protein FtsX (297 aa).

The Cytoplasmic portion of the chain corresponds to 1-24 (MKAKTLSRHLREGVKNLSRNGWMT). A helical membrane pass occupies residues 25 to 45 (FASVSAVTVTLLLVGVFLTAI). Topologically, residues 46–171 (MNMNHFATKV…LFDTVKTGRN (126 aa)) are extracellular. The helical transmembrane segment at 172-192 (IGIVLIAGLLFTAMFLISNTI) threads the bilayer. The Cytoplasmic segment spans residues 193–219 (KITIYARSTEIEIMKLVGATNWFIRWP). Residues 220–240 (FLLEGLFLGVLGSIIPIGLIL) traverse the membrane as a helical segment. At 241–270 (VTYNSLQGMFNEKLGGTIFELLPYSPFVFQ) the chain is on the extracellular side. The chain crosses the membrane as a helical span at residues 271–291 (LAGLLVLIGALIGMWGSVMSI). Residues 292 to 297 (RRFLKV) are Cytoplasmic-facing.

It belongs to the ABC-4 integral membrane protein family. FtsX subfamily. Interacts with FtsE.

The protein resides in the cell membrane. Part of the ABC transporter FtsEX involved in asymmetric cellular division facilitating the initiation of sporulation. The protein is Cell division protein FtsX of Bacillus anthracis.